A 65-amino-acid polypeptide reads, in one-letter code: Dybowskin-2CDYa (65 aa).

The signal sequence occupies residues 1–22; sequence MFTLKKSLLLLFFIGVIKLSLC. Residues 23-47 constitute a propeptide that is removed on maturation; it reads EEERNADDDERRDDPDEMDVEVENR. A compositionally biased stretch (acidic residues) spans 26–43; that stretch reads RNADDDERRDDPDEMDVE. A disordered region spans residues 26–65; that stretch reads RNADDDERRDDPDEMDVEVENRSAVGRHGRRFGLRKHRKH. Basic residues predominate over residues 50–65; sequence VGRHGRRFGLRKHRKH.

The protein belongs to the frog skin active peptide (FSAP) family. Brevinin subfamily. In terms of tissue distribution, expressed by the skin glands.

It localises to the secreted. In terms of biological role, antimicrobial peptide. Has activity against the Gram-positive bacterium S.aureus (MIC=6 uM) and the Gram-negative bacterium E.coli (MIC=3 uM). Lacks hemolytic activity against human erythrocytes. This chain is Dybowskin-2CDYa, found in Rana dybowskii (Dybovsky's frog).